Reading from the N-terminus, the 1013-residue chain is A-type ATP synthase subunit A (1013 aa).

Residues 392–525 enclose the DOD-type homing endonuclease domain; the sequence is FLGYVIGDGT…LTYLLAKLGI (134 aa).

The protein belongs to the ATPase alpha/beta chains family. As to quaternary structure, has multiple subunits with at least A(3), B(3), C, D, E, F, H, I and proteolipid K(x). This protein undergoes a protein self splicing that involves a post-translational excision of the VDE intervening region (intein) followed by peptide ligation.

The protein localises to the cell membrane. The enzyme catalyses ATP + H2O + 4 H(+)(in) = ADP + phosphate + 5 H(+)(out). Component of the A-type ATP synthase that produces ATP from ADP in the presence of a proton gradient across the membrane. The A chain is the catalytic subunit. This Pyrococcus furiosus (strain ATCC 43587 / DSM 3638 / JCM 8422 / Vc1) protein is A-type ATP synthase subunit A.